A 39-amino-acid chain; its full sequence is Cytochrome b6-f complex subunit 5 (39 aa).

The helical transmembrane segment at 5–25 (LLCGIVLGLVPITLLGLFVSA) threads the bilayer.

This sequence belongs to the PetG family. The 4 large subunits of the cytochrome b6-f complex are cytochrome b6, subunit IV (17 kDa polypeptide, PetD), cytochrome f and the Rieske protein, while the 4 small subunits are PetG, PetL, PetM and PetN. The complex functions as a dimer.

The protein resides in the cellular thylakoid membrane. Component of the cytochrome b6-f complex, which mediates electron transfer between photosystem II (PSII) and photosystem I (PSI), cyclic electron flow around PSI, and state transitions. PetG is required for either the stability or assembly of the cytochrome b6-f complex. The sequence is that of Cytochrome b6-f complex subunit 5 from Prochlorococcus marinus (strain MIT 9301).